The following is a 448-amino-acid chain: Oxysterol-binding protein homolog 6 (448 aa).

The interval 1-42 (MGSKKLTVGSDSHRLSKSSFSSNKSSHSATKDQPIDTDDIDE) is disordered. Ser-16 is modified (phosphoserine). The segment covering 17–28 (KSSFSSNKSSHS) has biased composition (low complexity). The tract at residues 54-391 (IISQLRPGCD…PGEDLDYCIY (338 aa)) is OSBP-related domain (ORD). A 1,2-diacyl-sn-glycero-3-phospho-(1D-myo-inositol 4-phosphate) is bound by residues 64-69 (LTRITL), 126-129 (KPLN), and 157-158 (HH). A 1,2-diacyl-sn-glycero-3-phospho-L-serine-binding positions include 64–69 (LTRITL) and Asn-129. Ser-183 is an a 1,2-diacyl-sn-glycero-3-phospho-L-serine binding site. Lys-351, Glu-355, and Arg-359 together coordinate a 1,2-diacyl-sn-glycero-3-phospho-(1D-myo-inositol 4-phosphate).

This sequence belongs to the OSBP family. As to quaternary structure, interacts with the AAA ATPase VPS4; regulates OSH6 membrane association. VPS4 is required for membrane dissociation of OSH6.

It localises to the cytoplasm. It is found in the cell membrane. The protein localises to the endoplasmic reticulum membrane. The catalysed reaction is a 1,2-diacyl-sn-glycero-3-phospho-L-serine(in) = a 1,2-diacyl-sn-glycero-3-phospho-L-serine(out). Functionally, lipid transport protein (LTP) involved in non-vesicular transfer of lipids between membranes. Functions in phosphoinositide-coupled directional transport of various lipids by carrying the lipid molecule in a hydrophobic pocket and transferring it between membranes through the cytosol. Involved in maintenance of intracellular sterol distribution and homeostasis. Catalyzes the lipid countertransport between the endoplasmic reticulum (ER) and the plasma membrane (PM). Specifically exchanges phosphatidylserine (PS) with phosphatidylinositol 4-phosphate (PI4P), delivering phosphatidylserine to the PM in exchange for PI4P, which is delivered to the ER-localized PI4P phosphatase SAC1 for degradation. Thus, by maintaining a PI4P gradient at the ER/PM interface, SAC1 drives PS transport. Binds phosphatidylserine and PI4P in a mutually exclusive manner. Also binds phosphatidic acid (PA). This Saccharomyces cerevisiae (strain ATCC 204508 / S288c) (Baker's yeast) protein is Oxysterol-binding protein homolog 6.